Reading from the N-terminus, the 428-residue chain is 3-phosphoshikimate 1-carboxyvinyltransferase (428 aa).

3-phosphoshikimate contacts are provided by lysine 23, serine 24, and arginine 28. Residue lysine 23 coordinates phosphoenolpyruvate. Residues glycine 97 and arginine 125 each contribute to the phosphoenolpyruvate site. 3-phosphoshikimate is bound by residues serine 170, serine 171, glutamine 172, serine 198, aspartate 314, asparagine 337, and lysine 341. Glutamine 172 serves as a coordination point for phosphoenolpyruvate. The active-site Proton acceptor is the aspartate 314. Residues arginine 345, arginine 387, and lysine 412 each contribute to the phosphoenolpyruvate site.

Belongs to the EPSP synthase family. As to quaternary structure, monomer.

It localises to the cytoplasm. The enzyme catalyses 3-phosphoshikimate + phosphoenolpyruvate = 5-O-(1-carboxyvinyl)-3-phosphoshikimate + phosphate. Its pathway is metabolic intermediate biosynthesis; chorismate biosynthesis; chorismate from D-erythrose 4-phosphate and phosphoenolpyruvate: step 6/7. Its function is as follows. Catalyzes the transfer of the enolpyruvyl moiety of phosphoenolpyruvate (PEP) to the 5-hydroxyl of shikimate-3-phosphate (S3P) to produce enolpyruvyl shikimate-3-phosphate and inorganic phosphate. The protein is 3-phosphoshikimate 1-carboxyvinyltransferase of Erwinia tasmaniensis (strain DSM 17950 / CFBP 7177 / CIP 109463 / NCPPB 4357 / Et1/99).